A 308-amino-acid chain; its full sequence is Thiohydrolase (308 aa).

Belongs to the polyketide transferase af380 family.

Its pathway is mycotoxin biosynthesis. In terms of biological role, thiohydrolase; part of the gene cluster that mediates the biosynthesis of brefeldin A (BFA), a protein transport inhibitor that shows antiviral, antifungal, and antitumor properties. The proposed biosynthesis of BFA involves formation of an acyclic polyketide chain that is differentially tailored throughout the backbone. The highly reducing polyketide synthase Bref-PKS is proposed to synthesize the precisely reduced octaketide precursor, which could then be directly offloaded by the thiohydrolase enzyme Bref-TH followed by a cytochrome P450 monooxygenase-mediated formation of the cyclopentane ring and macrocyclization to afford 7-deoxy BFA. Alternatively, the first ring annulation can also occur on the ACP-tethered intermediate before the thiohydrolase release and lactonization. The C7-hydroxylation by another cytochrome P450 monooxygenase is believed to be the final step in the process to obtain the final structure of BFA. In addition to the HRPKS Bref-PKS and the thiohydrolase Bref-TH, the brefeldin A biosynthesis cluster contains 4 cytochrome p450 monooxygenases (called orf3 to orf6), as well a the probable cluster-specific transcription regulator orf8. The polypeptide is Thiohydrolase (Eupenicillium brefeldianum (Penicillium brefeldianum)).